Here is a 327-residue protein sequence, read N- to C-terminus: Acetyl-coenzyme A carboxylase carboxyl transferase subunit beta (327 aa).

Residues 24-293 form the CoA carboxyltransferase N-terminal domain; the sequence is LWIKCPDTGQ…LTVTTAVEAP (270 aa). Residues 293–311 are compositionally biased toward low complexity; that stretch reads PAEAAAKAEPEATTTEQPG. The disordered stretch occupies residues 293 to 327; the sequence is PAEAAAKAEPEATTTEQPGAPAPTEPPAQPAAPQA. Residues 312–327 show a composition bias toward pro residues; the sequence is APAPTEPPAQPAAPQA.

It belongs to the AccD/PCCB family. Acetyl-CoA carboxylase is a heterohexamer composed of biotin carboxyl carrier protein (AccB), biotin carboxylase (AccC) and two subunits each of ACCase subunit alpha (AccA) and ACCase subunit beta (AccD).

It localises to the cytoplasm. The enzyme catalyses N(6)-carboxybiotinyl-L-lysyl-[protein] + acetyl-CoA = N(6)-biotinyl-L-lysyl-[protein] + malonyl-CoA. It participates in lipid metabolism; malonyl-CoA biosynthesis; malonyl-CoA from acetyl-CoA: step 1/1. In terms of biological role, component of the acetyl coenzyme A carboxylase (ACC) complex. Biotin carboxylase (BC) catalyzes the carboxylation of biotin on its carrier protein (BCCP) and then the CO(2) group is transferred by the transcarboxylase to acetyl-CoA to form malonyl-CoA. The polypeptide is Acetyl-coenzyme A carboxylase carboxyl transferase subunit beta (Rhodopseudomonas palustris (strain ATCC BAA-98 / CGA009)).